Here is a 66-residue protein sequence, read N- to C-terminus: Phylloseptin-Az3 (66 aa).

Positions 1–22 (MAFLKKSLFLVLFLGLVSLSIC) are cleaved as a signal peptide. A propeptide spanning residues 23–44 (EEEKRETEEEEYNQEDDDKSEE) is cleaved from the precursor. F65 is subject to Phenylalanine amide.

As to expression, expressed by the skin glands.

It localises to the secreted. Has antimicrobial activity. In Pithecopus azureus (Orange-legged monkey tree frog), this protein is Phylloseptin-Az3.